Here is a 639-residue protein sequence, read N- to C-terminus: MISYGENLGGRAVSPLPVRGGHMMHGAAFAYVPSPQVLHRIPGTSAYGFPSVGPMALPEHGCPYGEVVEHHDPLPAKLALEDERKPEPGLIQKLRRAGVTLLKVPLMLSFLYLFVCSLDVLSSAFQLAGGKVAGDIFKDNAILSNPVAGLVVGILVTVLVQSSSTSTSIVVSMVSSGLLEVSSAIPIIMGSNIGTSVTNTIVALMQAGDRTDFRRAFAGATVHDCFNWLSVLVLLPLEAATGYLHHITRLVVASFNIRGGRDAPDLLKIITEPFTKLIIQLDKSVITSLASGDESLRNHSLIRVWCYPNPTEVPTPMPRAEANTSRMLRNATLEKCNHIFVDTGLPDLAVGLILLAGSLALLCTCLILLVKMLNSLLKGQVAKVIQKVINTDFPTPFTWATGYFAMVVGASMTFVVQSSSVFTSAITPLIGLGVISIERAYPLTLGSNIGTTTTAILAALASPREKLSSAFQIALCHFFFNISGILLWYPVPCTRLPIRMAKALGKRTAKYRWFAVLYLLLCFLLLPSMVFGLSMAGWRAMVGVGAPFGALLAFVVLVSALQHRSPGCLPKWLQTWDFLPLWVHSLKPLDHLITRATLCCARPEPRSPPLPTRVFLEELPPATPSPRLAMPHHHDATRL.

Over 1–103 (MISYGENLGG…LRRAGVTLLK (103 aa)) the chain is Cytoplasmic. 2 positions are modified to phosphoserine: serine 14 and serine 34. Residues 104-125 (VPLMLSFLYLFVCSLDVLSSAF) traverse the membrane as a helical segment. Over 126 to 145 (QLAGGKVAGDIFKDNAILSN) the chain is Extracellular. Residues 146 to 163 (PVAGLVVGILVTVLVQSS) form a helical membrane-spanning segment. The Cytoplasmic segment spans residues 164–165 (ST). A helical transmembrane segment spans residues 166 to 185 (STSIVVSMVSSGLLEVSSAI). The Extracellular segment spans residues 186-347 (PIIMGSNIGT…HIFVDTGLPD (162 aa)). Cystine bridges form between cysteine 225/cysteine 522 and cysteine 306/cysteine 336. N-linked (GlcNAc...) asparagine glycosylation is found at asparagine 298, asparagine 323, and asparagine 330. Residues 348–370 (LAVGLILLAGSLALLCTCLILLV) form a helical membrane-spanning segment. Over 371 to 412 (KMLNSLLKGQVAKVIQKVINTDFPTPFTWATGYFAMVVGASM) the chain is Cytoplasmic. Residues 413 to 436 (TFVVQSSSVFTSAITPLIGLGVIS) traverse the membrane as a helical segment. Topologically, residues 437-466 (IERAYPLTLGSNIGTTTTAILAALASPREK) are extracellular. Residues 467-487 (LSSAFQIALCHFFFNISGILL) form a helical membrane-spanning segment. Residues 488-513 (WYPVPCTRLPIRMAKALGKRTAKYRW) are Cytoplasmic-facing. Threonine 508 is subject to Phosphothreonine; by PKC. A helical membrane pass occupies residues 514 to 534 (FAVLYLLLCFLLLPSMVFGLS). Residues 535–539 (MAGWR) are Extracellular-facing. Residues 540–561 (AMVGVGAPFGALLAFVVLVSAL) traverse the membrane as a helical segment. The Cytoplasmic segment spans residues 562–639 (QHRSPGCLPK…MPHHHDATRL (78 aa)). Serine 607 carries the phosphoserine modification. Threonine 623 carries the phosphothreonine modification. Phosphoserine is present on serine 625.

Belongs to the SLC34A transporter family. Interacts via its C-terminal region with NHERF4. Interacts with NHERF1. Interacts with TMEM174; regulates SLC34A1 internalization by PTH and FGF23.

It is found in the apical cell membrane. The protein localises to the cell membrane. The catalysed reaction is 3 Na(+)(out) + phosphate(out) = 3 Na(+)(in) + phosphate(in). Involved in actively transporting phosphate into cells via Na(+) cotransport in the renal brush border membrane. The cotransport has a Na(+):Pi stoichiometry of 3:1 and is electrogenic. The sequence is that of Sodium-dependent phosphate transport protein 2A from Ovis aries (Sheep).